The chain runs to 184 residues: MLQMAGQCSQNEYFDSLLHACIPCQLRCSSNTPPLTCQRYCNASVTNSVKGTNAILWTCLGLSLIISLAVFVLMFLLRKINSEPLKDEFKNTGSGLLGMANIDLEKSRTGDEIILPRGLEYTVEECTCEDCIKSKPKVDSDHCFPLPAMEEGATILVTTKTNDYCKSLPAALSATEIEKSISAR.

At 1–54 (MLQMAGQCSQNEYFDSLLHACIPCQLRCSSNTPPLTCQRYCNASVTNSVKGTNA) the chain is on the extracellular side. Residues 7-41 (QCSQNEYFDSLLHACIPCQLRCSSNTPPLTCQRYC) form a TNFR-Cys repeat. 3 disulfides stabilise this stretch: C8-C21, C24-C37, and C28-C41. The chain crosses the membrane as a helical; Signal-anchor for type III membrane protein span at residues 55 to 77 (ILWTCLGLSLIISLAVFVLMFLL). The Cytoplasmic portion of the chain corresponds to 78 to 184 (RKINSEPLKD…TEIEKSISAR (107 aa)).

Associates with TRAF1, TRAF2, TRAF3, TRAF5 and TRAF6. Expressed in mature B-cells, but not in T-cells or monocytes.

The protein localises to the cell membrane. The protein resides in the endomembrane system. In terms of biological role, receptor for TNFSF13B/BLyS/BAFF and TNFSF13/APRIL. Promotes B-cell survival and plays a role in the regulation of humoral immunity. Activates NF-kappa-B and JNK. This Homo sapiens (Human) protein is Tumor necrosis factor receptor superfamily member 17 (TNFRSF17).